Here is a 161-residue protein sequence, read N- to C-terminus: Probable chemoreceptor glutamine deamidase CheD (161 aa).

This sequence belongs to the CheD family.

The enzyme catalyses L-glutaminyl-[protein] + H2O = L-glutamyl-[protein] + NH4(+). In terms of biological role, probably deamidates glutamine residues to glutamate on methyl-accepting chemotaxis receptors (MCPs), playing an important role in chemotaxis. The sequence is that of Probable chemoreceptor glutamine deamidase CheD from Syntrophomonas wolfei subsp. wolfei (strain DSM 2245B / Goettingen).